A 236-amino-acid chain; its full sequence is Flagellar L-ring protein (236 aa).

The N-terminal stretch at 1 to 16 (MRMRITAILAAGLLAG) is a signal peptide. Cysteine 17 carries the N-palmitoyl cysteine lipid modification. Cysteine 17 carries S-diacylglycerol cysteine lipidation. Residues 96–143 (ENETDRSRKNSSGFNLGASGESQTSDFAWSGDLEYGSNTKTEGDGKTE) form a disordered region. The span at 105 to 122 (NSSGFNLGASGESQTSDF) shows a compositional bias: polar residues.

The protein belongs to the FlgH family. As to quaternary structure, the basal body constitutes a major portion of the flagellar organelle and consists of four rings (L,P,S, and M) mounted on a central rod.

It is found in the cell outer membrane. The protein resides in the bacterial flagellum basal body. In terms of biological role, assembles around the rod to form the L-ring and probably protects the motor/basal body from shearing forces during rotation. This Sinorhizobium medicae (strain WSM419) (Ensifer medicae) protein is Flagellar L-ring protein.